The chain runs to 353 residues: Photosystem II D2 protein (353 aa).

N-acetylthreonine is present on threonine 2. Position 2 is a phosphothreonine (threonine 2). A helical transmembrane segment spans residues 41–61; sequence CAYFALGGWFTGTTFVTSWYT. Histidine 118 is a chlorophyll a binding site. A helical membrane pass occupies residues 125–141; that stretch reads GFMLRQFELARSVQLRP. The pheophytin a site is built by glutamine 130 and asparagine 143. The helical transmembrane segment at 153–166 threads the bilayer; it reads VFVSVFLIYPLGQS. Chlorophyll a is bound at residue histidine 198. The chain crosses the membrane as a helical span at residues 208 to 228; sequence AALLCAIHGATVENTLFEDGD. A plastoquinone is bound by residues histidine 215 and phenylalanine 262. Position 215 (histidine 215) interacts with Fe cation. Residue histidine 269 coordinates Fe cation. The helical transmembrane segment at 279-295 threads the bilayer; the sequence is GLWMSALGVVGLALNLR.

The protein belongs to the reaction center PufL/M/PsbA/D family. As to quaternary structure, PSII is composed of 1 copy each of membrane proteins PsbA, PsbB, PsbC, PsbD, PsbE, PsbF, PsbH, PsbI, PsbJ, PsbK, PsbL, PsbM, PsbT, PsbX, PsbY, PsbZ, Psb30/Ycf12, at least 3 peripheral proteins of the oxygen-evolving complex and a large number of cofactors. It forms dimeric complexes. The cofactor is The D1/D2 heterodimer binds P680, chlorophylls that are the primary electron donor of PSII, and subsequent electron acceptors. It shares a non-heme iron and each subunit binds pheophytin, quinone, additional chlorophylls, carotenoids and lipids. There is also a Cl(-1) ion associated with D1 and D2, which is required for oxygen evolution. The PSII complex binds additional chlorophylls, carotenoids and specific lipids..

The protein resides in the plastid. It is found in the chloroplast thylakoid membrane. The enzyme catalyses 2 a plastoquinone + 4 hnu + 2 H2O = 2 a plastoquinol + O2. Functionally, photosystem II (PSII) is a light-driven water:plastoquinone oxidoreductase that uses light energy to abstract electrons from H(2)O, generating O(2) and a proton gradient subsequently used for ATP formation. It consists of a core antenna complex that captures photons, and an electron transfer chain that converts photonic excitation into a charge separation. The D1/D2 (PsbA/PsbD) reaction center heterodimer binds P680, the primary electron donor of PSII as well as several subsequent electron acceptors. D2 is needed for assembly of a stable PSII complex. The protein is Photosystem II D2 protein of Citrus sinensis (Sweet orange).